The chain runs to 298 residues: MANQGGFKKKTFGWVIKDLQTHRRCSVPILIGDSYWRLVALPNENGYFSLFLEVNMELIPCGWRRYVEFRMTIVNHISPIHSVDKKGWRWFDENTKNWGFKDMIPAVILNNVNVGFLLNGEITIIAEVEVHEFIDTLNASQVEELSDDSSEDLQNKDNVTIEVNGFQVLDSQVDQVNAIFEKHPDLISNFSLKNQHIRNAYMHALLDLTKTLSKSTKELTVEDMNEADNTITDLIKAGLNLDWLRQKFDQALEKQIAYDTRIGELEKQVKKRKLAVTELEADLEKEKAAASASLMLFD.

Residues 9-128 form the MATH domain; the sequence is KKTFGWVIKD…NGEITIIAEV (120 aa). Residues 240–288 adopt a coiled-coil conformation; the sequence is NLDWLRQKFDQALEKQIAYDTRIGELEKQVKKRKLAVTELEADLEKEKA.

This chain is MATH domain and coiled-coil domain-containing protein At3g58280, found in Arabidopsis thaliana (Mouse-ear cress).